The sequence spans 62 residues: Small ribosomal subunit protein uS14 (62 aa).

Residues C25, C28, C41, and C44 each contribute to the Zn(2+) site.

Belongs to the universal ribosomal protein uS14 family. Zinc-binding uS14 subfamily. As to quaternary structure, part of the 30S ribosomal subunit. Contacts proteins S3 and S10. Zn(2+) serves as cofactor.

Binds 16S rRNA, required for the assembly of 30S particles and may also be responsible for determining the conformation of the 16S rRNA at the A site. The protein is Small ribosomal subunit protein uS14 of Aquifex aeolicus (strain VF5).